The following is a 146-amino-acid chain: MYIIYGADHRISNCSLLKRRIPEARIFKLYPNDKTSRSSSASVAIPDYETQGQTAGQITPKSWLCMLSSTVPATKSSEWIFDTGCTSHMCHDRSIFSSFTRSSRKDFVRGVGGSIPIMGSGTVNIGTVQLHDVSYVPDLPVNLISV.

In Saccharomyces cerevisiae (strain ATCC 204508 / S288c) (Baker's yeast), this protein is Putative transposon Ty5-1 protein YCL075W (TY5B).